Here is a 773-residue protein sequence, read N- to C-terminus: MKIEENMELPVILVTSGVLLPGASLKIPIRSKLNIQTIEKYLTRSSNDNYVVIAYKVSTDKVYEVATIAYVEKLFGWTFNSTVHYSLDVIGLHRANIDKLSLPTCIVSKVVDLNEAISNQNAIEKLVTGAKIIASNSLTDKFSREIYSLIDEKEYGKLADLCVSQMKFLGFMQLLEFLGANGTDARVEMCIKWMNEKKDANTLKLKVPNSLEASFPVDGKKRKIPNVKNQVEQLEEKLNAIEFSDEVSDRVYSELHRLKSMNAQQSEYNILMNWLELVSSLPWNTSTIDDIELHKARTILTESHEAMDDVKERVLEHLAVCKMNNSVKGMILCFTGPPGIGKTSIAKAIAESMGRKFQRVSLGGIRDESDIRGHRRTYVAAMPGRIIEALKTCKTNNPVFLLDEVDKLYSGNQGSPSAALLELLDPEQNSTFHDHYLNIPFDVSKIMFIATANDIDRLEPALRDRLEIIEMSGYSLKEKVKICENHLLTRQLTKHCISHDYVKLERQAIVAMIEEYTMEAGVRQLERNVGAICRNVALRLAEALNSDPGADVLPVMELPIQISASNIHKILKNKHMKRVKIVEKMRPLPAGVCFGLSVTTIGGRVMPIEASKSKGTGKIVTTGHLGKVLKESILVAKGWLSANSERLGLGTLEDQDIHVHLPAGAVNKDGPSAGTGLACALVSLATNIPLRSDAAVTGEISLTGHVLPIGGVKEKVLAAQREGLRRVVLPKSNEEEYLKMDEDIRLEMDVVLAETIEDVIGAMMDKSPVLAKL.

The Lon N-terminal domain occupies 9-198; that stretch reads LPVILVTSGV…MCIKWMNEKK (190 aa). An ATP-binding site is contributed by 336–343; that stretch reads GPPGIGKT. Residues 587–766 enclose the Lon proteolytic domain; it reads PLPAGVCFGL…EDVIGAMMDK (180 aa). Active-site residues include serine 672 and lysine 715. The Microbody targeting signal signature appears at 771–773; the sequence is AKL.

It belongs to the peptidase S16 family.

The protein resides in the peroxisome matrix. It catalyses the reaction Hydrolysis of proteins in presence of ATP.. Functionally, ATP-dependent serine protease that mediates the selective degradation of misfolded and unassembled polypeptides in the peroxisomal matrix. Necessary for type 2 peroxisome targeting signal (PTS2)-containing protein processing and facilitates peroxisome matrix protein import. The sequence is that of Lon protease homolog 2, peroxisomal from Caenorhabditis elegans.